We begin with the raw amino-acid sequence, 361 residues long: UDP-N-acetylglucosamine--N-acetylmuramyl-(pentapeptide) pyrophosphoryl-undecaprenol N-acetylglucosamine transferase (361 aa).

UDP-N-acetyl-alpha-D-glucosamine-binding positions include 13 to 15 (TGG), Asn125, Arg167, Ser196, Ile251, 270 to 275 (ALTVTE), and Gln296.

The protein belongs to the glycosyltransferase 28 family. MurG subfamily.

The protein localises to the cell inner membrane. It carries out the reaction di-trans,octa-cis-undecaprenyl diphospho-N-acetyl-alpha-D-muramoyl-L-alanyl-D-glutamyl-meso-2,6-diaminopimeloyl-D-alanyl-D-alanine + UDP-N-acetyl-alpha-D-glucosamine = di-trans,octa-cis-undecaprenyl diphospho-[N-acetyl-alpha-D-glucosaminyl-(1-&gt;4)]-N-acetyl-alpha-D-muramoyl-L-alanyl-D-glutamyl-meso-2,6-diaminopimeloyl-D-alanyl-D-alanine + UDP + H(+). The protein operates within cell wall biogenesis; peptidoglycan biosynthesis. Cell wall formation. Catalyzes the transfer of a GlcNAc subunit on undecaprenyl-pyrophosphoryl-MurNAc-pentapeptide (lipid intermediate I) to form undecaprenyl-pyrophosphoryl-MurNAc-(pentapeptide)GlcNAc (lipid intermediate II). The sequence is that of UDP-N-acetylglucosamine--N-acetylmuramyl-(pentapeptide) pyrophosphoryl-undecaprenol N-acetylglucosamine transferase from Psychrobacter cryohalolentis (strain ATCC BAA-1226 / DSM 17306 / VKM B-2378 / K5).